The following is a 727-amino-acid chain: ABC transporter G family member 6 (727 aa).

The 266-residue stretch at 68–333 folds into the ABC transporter domain; it reads LSFTDLTYSV…FAEFGHPIPE (266 aa). 126–133 is a binding site for ATP; the sequence is GASGSGKS. Positions 421–631 constitute an ABC transmembrane type-2 domain; the sequence is VELAVLAKRS…PYEAVLLNEF (211 aa). The next 6 helical transmembrane spans lie at 440 to 460, 475 to 495, 517 to 537, 560 to 580, 581 to 601, and 700 to 720; these read LFGI…TMFW, CFAF…PVFL, LSHS…FAAI, ASFW…PHVM, LGYT…GFFI, and LWVT…SLLL.

The protein belongs to the ABC transporter superfamily. ABCG family. Eye pigment precursor importer (TC 3.A.1.204) subfamily.

Its subcellular location is the membrane. In Arabidopsis thaliana (Mouse-ear cress), this protein is ABC transporter G family member 6 (ABCG6).